A 229-amino-acid chain; its full sequence is Peroxiredoxin 1 (229 aa).

One can recognise a Thioredoxin domain in the interval 33 to 192; the sequence is LGPKNKAPDF…AFRTLKAFQF (160 aa). The Cysteine sulfenic acid (-SOH) intermediate role is filled by cysteine 78.

This sequence belongs to the peroxiredoxin family. AhpC/Prx1 subfamily. Homodimer; disulfide-linked, upon oxidation.

The catalysed reaction is a hydroperoxide + [thioredoxin]-dithiol = an alcohol + [thioredoxin]-disulfide + H2O. Its function is as follows. Thiol-specific peroxidase that catalyzes the reduction of hydrogen peroxide and organic hydroperoxides to water and alcohols, respectively. Plays a role in cell protection against oxidative stress by detoxifying peroxides and as sensor of hydrogen peroxide-mediated signaling events. This chain is Peroxiredoxin 1 (TSA1), found in Brugia malayi (Filarial nematode worm).